The chain runs to 172 residues: uncharacterized protein (172 aa).

In terms of domain architecture, HotDog ACOT-type spans 10–122 (KESKVVKTSR…FLTFVALDSN (113 aa)). Residues 148–172 (RANERKNRKRHSQALANALGTDKPW) form a disordered region.

It belongs to the acyl coenzyme A hydrolase family.

This is an uncharacterized protein from Bacillus subtilis (strain 168).